An 89-amino-acid chain; its full sequence is Small ribosomal subunit protein uS15 (89 aa).

It belongs to the universal ribosomal protein uS15 family. In terms of assembly, part of the 30S ribosomal subunit. Forms a bridge to the 50S subunit in the 70S ribosome, contacting the 23S rRNA.

In terms of biological role, one of the primary rRNA binding proteins, it binds directly to 16S rRNA where it helps nucleate assembly of the platform of the 30S subunit by binding and bridging several RNA helices of the 16S rRNA. Its function is as follows. Forms an intersubunit bridge (bridge B4) with the 23S rRNA of the 50S subunit in the ribosome. The protein is Small ribosomal subunit protein uS15 of Exiguobacterium sp. (strain ATCC BAA-1283 / AT1b).